Consider the following 487-residue polypeptide: Argininosuccinate lyase (487 aa).

This sequence belongs to the lyase 1 family. Argininosuccinate lyase subfamily.

Its subcellular location is the cytoplasm. It carries out the reaction 2-(N(omega)-L-arginino)succinate = fumarate + L-arginine. The protein operates within amino-acid biosynthesis; L-arginine biosynthesis; L-arginine from L-ornithine and carbamoyl phosphate: step 3/3. This chain is Argininosuccinate lyase, found in Methanococcus aeolicus (strain ATCC BAA-1280 / DSM 17508 / OCM 812 / Nankai-3).